Reading from the N-terminus, the 550-residue chain is Probable methionine--tRNA ligase, cytoplasmic (550 aa).

The 'HIGH' region signature appears at 10 to 20 (PYVNNQPHLGN). Residues 328–332 (KFSKS) carry the 'KMSKS' region motif. K331 serves as a coordination point for ATP.

The protein belongs to the class-I aminoacyl-tRNA synthetase family.

Its subcellular location is the cytoplasm. It carries out the reaction tRNA(Met) + L-methionine + ATP = L-methionyl-tRNA(Met) + AMP + diphosphate. The protein is Probable methionine--tRNA ligase, cytoplasmic of Encephalitozoon cuniculi (strain GB-M1) (Microsporidian parasite).